The primary structure comprises 249 residues: Ubiquinone biosynthesis O-methyltransferase (249 aa).

Residues R41, G72, D93, and M136 each contribute to the S-adenosyl-L-methionine site.

This sequence belongs to the methyltransferase superfamily. UbiG/COQ3 family.

It carries out the reaction a 3-demethylubiquinol + S-adenosyl-L-methionine = a ubiquinol + S-adenosyl-L-homocysteine + H(+). The catalysed reaction is a 3-(all-trans-polyprenyl)benzene-1,2-diol + S-adenosyl-L-methionine = a 2-methoxy-6-(all-trans-polyprenyl)phenol + S-adenosyl-L-homocysteine + H(+). It functions in the pathway cofactor biosynthesis; ubiquinone biosynthesis. Functionally, O-methyltransferase that catalyzes the 2 O-methylation steps in the ubiquinone biosynthetic pathway. The polypeptide is Ubiquinone biosynthesis O-methyltransferase (Methylobacterium sp. (strain 4-46)).